We begin with the raw amino-acid sequence, 222 residues long: NAD(P)H-hydrate epimerase (222 aa).

Residues 9–209 (MQQIDSYTIE…DIGLRLPEDF (201 aa)) form the YjeF N-terminal domain. 57–61 (NNGAD) contacts (6S)-NADPHX. Residues asparagine 58 and aspartate 119 each contribute to the K(+) site. (6S)-NADPHX-binding positions include 123 to 129 (GVGLNNT) and aspartate 152. Threonine 155 provides a ligand contact to K(+).

Belongs to the NnrE/AIBP family. It depends on K(+) as a cofactor.

It carries out the reaction (6R)-NADHX = (6S)-NADHX. The enzyme catalyses (6R)-NADPHX = (6S)-NADPHX. Its function is as follows. Catalyzes the epimerization of the S- and R-forms of NAD(P)HX, a damaged form of NAD(P)H that is a result of enzymatic or heat-dependent hydration. This is a prerequisite for the S-specific NAD(P)H-hydrate dehydratase to allow the repair of both epimers of NAD(P)HX. This is NAD(P)H-hydrate epimerase from Leuconostoc citreum (strain KM20).